Reading from the N-terminus, the 117-residue chain is Hainantoxin-XV-5 (117 aa).

A signal peptide spans 1–20; the sequence is MKLCAVIIASLLVCVAVASS. The segment at 20-55 is disordered; the sequence is SSDNQKEFAQEKEMTREETQSLGEHEKDDEVTGSEE. Positions 21–56 are excised as a propeptide; that stretch reads SDNQKEFAQEKEMTREETQSLGEHEKDDEVTGSEER. Residues 23 to 55 are compositionally biased toward basic and acidic residues; that stretch reads NQKEFAQEKEMTREETQSLGEHEKDDEVTGSEE. 4 disulfides stabilise this stretch: Cys58/Cys72, Cys65/Cys78, Cys69/Cys115, and Cys71/Cys91.

The protein belongs to the neurotoxin 03 (Tx2) family. 02 subfamily. HNTX-XV sub-subfamily. Expressed by the venom gland.

The protein resides in the secreted. Putative ion channel inhibitor. In Cyriopagopus hainanus (Chinese bird spider), this protein is Hainantoxin-XV-5.